Consider the following 177-residue polypeptide: Ribosome maturation factor RimP (177 aa).

This sequence belongs to the RimP family.

The protein resides in the cytoplasm. Its function is as follows. Required for maturation of 30S ribosomal subunits. The chain is Ribosome maturation factor RimP from Streptococcus sanguinis (strain SK36).